Here is a 292-residue protein sequence, read N- to C-terminus: ATP synthase gamma chain (292 aa).

The protein belongs to the ATPase gamma chain family. As to quaternary structure, F-type ATPases have 2 components, CF(1) - the catalytic core - and CF(0) - the membrane proton channel. CF(1) has five subunits: alpha(3), beta(3), gamma(1), delta(1), epsilon(1). CF(0) has three main subunits: a, b and c.

It is found in the cell inner membrane. Functionally, produces ATP from ADP in the presence of a proton gradient across the membrane. The gamma chain is believed to be important in regulating ATPase activity and the flow of protons through the CF(0) complex. This is ATP synthase gamma chain from Brucella anthropi (strain ATCC 49188 / DSM 6882 / CCUG 24695 / JCM 21032 / LMG 3331 / NBRC 15819 / NCTC 12168 / Alc 37) (Ochrobactrum anthropi).